The primary structure comprises 310 residues: Pantoate--beta-alanine ligase (310 aa).

Position 32-39 (32-39 (MGYLHEGH)) interacts with ATP. His39 acts as the Proton donor in catalysis. Gln63 lines the (R)-pantoate pocket. Position 63 (Gln63) interacts with beta-alanine. 175 to 178 (GKKD) is an ATP binding site. A (R)-pantoate-binding site is contributed by Gln181. Residue 212–215 (MSSR) coordinates ATP.

The protein belongs to the pantothenate synthetase family. As to quaternary structure, homodimer. Expressed in roots, cotyledons, leaves, stems, cauline leaves, stigma, sepals and petals.

The protein resides in the cytoplasm. The protein localises to the cytosol. The catalysed reaction is (R)-pantoate + beta-alanine + ATP = (R)-pantothenate + AMP + diphosphate + H(+). The protein operates within cofactor biosynthesis; (R)-pantothenate biosynthesis; (R)-pantothenate from (R)-pantoate and beta-alanine: step 1/1. Enzyme kinetics do not match Michaelis-Menten kinetics, suggesting allosteric behavior. Inhibited by high pantoate levels. Functionally, catalyzes the condensation of pantoate with beta-alanine to form pantothenate. Essential for panthotenate biosynthesis. The polypeptide is Pantoate--beta-alanine ligase (Arabidopsis thaliana (Mouse-ear cress)).